Consider the following 236-residue polypeptide: Large ribosomal subunit protein uL3 (236 aa).

Belongs to the universal ribosomal protein uL3 family. Part of the 50S ribosomal subunit. Forms a cluster with proteins L14 and L19.

One of the primary rRNA binding proteins, it binds directly near the 3'-end of the 23S rRNA, where it nucleates assembly of the 50S subunit. This is Large ribosomal subunit protein uL3 from Anaeromyxobacter dehalogenans (strain 2CP-1 / ATCC BAA-258).